Here is a 678-residue protein sequence, read N- to C-terminus: Chloride channel protein ClC-Kb (678 aa).

Residues 1–50 (MEELVGLREGSSGNPVALRELWSPCPRLRRGIRGGLEWLKQKLFRVGEDW) lie on the Cytoplasmic side of the membrane. A run of 2 helical transmembrane segments spans residues 51–82 (YFLM…KWLY) and 91–111 (LRYL…SGFS). The segment at residues 116–127 (PFSGGSGIPELK) is an intramembrane region (helical). Chloride is bound at residue Ser-121. 2 consecutive transmembrane segments (helical) span residues 141-160 (IKNF…TGST) and 161-180 (LFLG…AAYL). The helical intramembrane region spans 203 to 224 (AGAAVGVATVFAAPFSGVLFCI). A helical transmembrane segment spans residues 236 to 255 (YWRGFFAATCGAFMFRLLAV). 4 residues coordinate Ca(2+): Glu-259, Glu-261, Asp-278, and Glu-281. A run of 2 helical transmembrane segments spans residues 282–310 (IFFF…LAFT) and 325–342 (PLYA…TYPP). Positions 349–360 (ASRLSMREHLDT) form an intramembrane region, helical. Residue Asn-364 is glycosylated (N-linked (GlcNAc...) asparagine). Transmembrane regions (helical) follow at residues 400 to 420 (GTLA…TTIP) and 421 to 440 (MPAG…GRLL). Phe-426 is a binding site for chloride. The helical intramembrane region spans 464-496 (GGYALAGAAAFSGAVTHSISTALLAFELTGQIV). The chain crosses the membrane as a helical span at residues 500–520 (PVLMAVLAANAIAQSCQPSFY). The Cytoplasmic portion of the chain corresponds to 521–678 (DGTIMVKKLP…SWVERQHTGF (158 aa)). CBS domains lie at 551-612 (MRRA…ARAS) and 620-678 (DILA…HTGF).

The protein belongs to the chloride channel (TC 2.A.49) family. CLCNKB subfamily. In terms of assembly, homodimer. Interacts with BSND. In terms of processing, N-glycosylated. Expressed predominantly in the kidney.

The protein localises to the basolateral cell membrane. It carries out the reaction chloride(in) = chloride(out). It catalyses the reaction iodide(out) = iodide(in). The catalysed reaction is nitrate(in) = nitrate(out). The enzyme catalyses bromide(in) = bromide(out). Its function is as follows. Anion-selective channel permeable to small monovalent anions with ion selectivity for chloride &gt; bromide &gt; nitrate &gt; iodide. Forms a homodimeric channel where each subunit has its own ion conduction pathway. May conduct double-barreled currents controlled by two types of gates, two fast gates that control each subunit independently and a slow common gate that opens and shuts off both subunits simultaneously. Assembles with the regulatory subunit BSND/Barttin for sorting at the basolateral plasma membrane domain and functional switch to the ion conducting state. CLCNKB:BSND channels display mostly a linear current-voltage relationship controlled by common gate. Mediates chloride conductance along nephron segments, namely the thick ascending limb of Henle's loop, convoluted tubule and the collecting duct, contributing to the maintenance of systemic acid-base and electrolyte homeostasis. Conducts chloride currents in the stria vascularis of the inner ear to establish the endocochlear potential necessary for normal hearing. The protein is Chloride channel protein ClC-Kb (CLCNKB) of Oryctolagus cuniculus (Rabbit).